Here is a 262-residue protein sequence, read N- to C-terminus: Oxidoreductase AgnL4 (262 aa).

It belongs to the avfA family.

Its pathway is secondary metabolite biosynthesis. Its function is as follows. Oxidoreductase; part of the gene cluster that mediates the biosynthesis of agnestins, dihydroxy-xanthone metabolites. The pathway begins with the assembly and cyclization of atrochrysone thioester by the non-reducing polyketide synthase Agnpks1. The atrochrysone carboxyl ACP thioesterase AgnL7 then breaks the thioester bond and releases the atrochrysone carboxylic acid as the first enzyme-free intermediate. The decarboxylase AgnL1 then catalyzes the concerted decarboxylation-elimination required to convert atochrysone carboxylic acid into emodin anthrone, which is further oxidized to emodin by the anthrone oxygenase AgnL2. Emodin then undergoes reduction catalyzed by the oxidoreductase AgnL4 to yield the dihydroquinone tautomer which is the substrate for reduction by the short chain dehydrogenase AgnL6 reduction to produce hydroxyketone, followed by AgnL8 dehydration and likely spontaneous autoxidation to chrysophanol. Baeyer-Villiger oxidation by the oxidase AgnL3 leads to monodictyphenone via cleavage of the C-10/C-10a bond of chrysophanol. Alternative cleavage at the C-4a/C-10 bond of chrysophanol also leads to the formation some cephalone F. Further conversion to agnestins A and B, requires reduction to dihydro-monodictyphenone, oxidation to agnestin C probably via an epoxide, and rearrangement to either agnestin A or agnestin B directly, although agnestin A or agnestin B can also interconvert. Within the cluster, AgnR1 is the only unassigned oxidoreductase present which could be involved in this conversion. However, AgnR1 seems not to be involved in this step, and thus genes involved in the proposed oxidation/reduction may be located elsewhere on the genome. Further agnestin A derivatives are probably formed by spontaneous decarboxylations, dehydrations and methanolysis reactions. This Paecilomyces divaricatus (Penicillium divaricatum) protein is Oxidoreductase AgnL4.